Here is a 270-residue protein sequence, read N- to C-terminus: 4-hydroxy-tetrahydrodipicolinate reductase (270 aa).

Residues 11-16 (GAGGRM) and E37 each bind NAD(+). R38 is a binding site for NADP(+). NAD(+) contacts are provided by residues 101 to 103 (GTT) and 125 to 128 (APNM). Residue H158 is the Proton donor/acceptor of the active site. A (S)-2,3,4,5-tetrahydrodipicolinate-binding site is contributed by H159. The active-site Proton donor is the K162. 168-169 (GT) contributes to the (S)-2,3,4,5-tetrahydrodipicolinate binding site.

It belongs to the DapB family.

The protein resides in the cytoplasm. The enzyme catalyses (S)-2,3,4,5-tetrahydrodipicolinate + NAD(+) + H2O = (2S,4S)-4-hydroxy-2,3,4,5-tetrahydrodipicolinate + NADH + H(+). It carries out the reaction (S)-2,3,4,5-tetrahydrodipicolinate + NADP(+) + H2O = (2S,4S)-4-hydroxy-2,3,4,5-tetrahydrodipicolinate + NADPH + H(+). Its pathway is amino-acid biosynthesis; L-lysine biosynthesis via DAP pathway; (S)-tetrahydrodipicolinate from L-aspartate: step 4/4. Its function is as follows. Catalyzes the conversion of 4-hydroxy-tetrahydrodipicolinate (HTPA) to tetrahydrodipicolinate. This Shewanella baltica (strain OS223) protein is 4-hydroxy-tetrahydrodipicolinate reductase.